Consider the following 189-residue polypeptide: MFWLLALLAYLLGSLSFAIVLSRLSGSPDPRSSGSGNAGATNMLRLAGRKLAILTLLGDLCKGLLPVLLARVAGLDLHAQAWVGICAVLGHLFPLYFRFKGGKGVATAAGMLMGLYFPAALLAIGAWLLTFYLTRTSSLAALIATPLTLPLLAWREPEALLPISVLTVMIVWRHRNNLRDLFAGRERHF.

5 helical membrane passes run 1 to 21 (MFWL…AIVL), 50 to 70 (KLAI…VLLA), 77 to 97 (LHAQ…PLYF), 111 to 131 (MLMG…LLTF), and 151 to 171 (LLAW…VMIV).

It belongs to the PlsY family. Probably interacts with PlsX.

It localises to the cell inner membrane. It catalyses the reaction an acyl phosphate + sn-glycerol 3-phosphate = a 1-acyl-sn-glycero-3-phosphate + phosphate. It functions in the pathway lipid metabolism; phospholipid metabolism. Catalyzes the transfer of an acyl group from acyl-phosphate (acyl-PO(4)) to glycerol-3-phosphate (G3P) to form lysophosphatidic acid (LPA). This enzyme utilizes acyl-phosphate as fatty acyl donor, but not acyl-CoA or acyl-ACP. This Pseudomonas putida (strain ATCC 700007 / DSM 6899 / JCM 31910 / BCRC 17059 / LMG 24140 / F1) protein is Glycerol-3-phosphate acyltransferase.